Here is a 267-residue protein sequence, read N- to C-terminus: Tryptophan synthase alpha chain (267 aa).

Residues glutamate 43 and aspartate 54 each act as proton acceptor in the active site.

Belongs to the TrpA family. In terms of assembly, tetramer of two alpha and two beta chains.

It catalyses the reaction (1S,2R)-1-C-(indol-3-yl)glycerol 3-phosphate + L-serine = D-glyceraldehyde 3-phosphate + L-tryptophan + H2O. Its pathway is amino-acid biosynthesis; L-tryptophan biosynthesis; L-tryptophan from chorismate: step 5/5. Functionally, the alpha subunit is responsible for the aldol cleavage of indoleglycerol phosphate to indole and glyceraldehyde 3-phosphate. The protein is Tryptophan synthase alpha chain of Bacillus subtilis subsp. natto.